We begin with the raw amino-acid sequence, 338 residues long: Taste receptor type 2 member 39 (338 aa).

Residues 1-30 (MLGRCFPPDTKEKQQLRMTKLCDPAESELS) lie on the Extracellular side of the membrane. A helical membrane pass occupies residues 31–51 (PFLITLILAVLLAEYLIGIIA). Residues 52 to 74 (NGFIMAIHAAEWVQNKAVSTSGR) are Cytoplasmic-facing. The helical transmembrane segment at 75–95 (ILVFLSVSRIALQSLMMLEIT) threads the bilayer. Residues 96–116 (ISSTSLSFYSEDAVYYAFKIS) lie on the Extracellular side of the membrane. The chain crosses the membrane as a helical span at residues 117-137 (FIFLNFCSLWFAAWLSFFYFV). Topologically, residues 138-156 (KIANFSYPLFLKLRWRITG) are cytoplasmic. The helical transmembrane segment at 157–177 (LIPWLLWLSVFISFSHSMFCI) threads the bilayer. Over 178-205 (NICTVYCNNSFPIHSSNSTKKTYLSEIN) the chain is Extracellular. N185 and N194 each carry an N-linked (GlcNAc...) asparagine glycan. Residues 206-226 (VVGLAFFFNLGIVTPLIMFIL) form a helical membrane-spanning segment. Residues 227 to 262 (TATLLILSLKRHTLHMGSNATGSNDPSMEAHMGAIK) lie on the Cytoplasmic side of the membrane. A helical membrane pass occupies residues 263–283 (AISYFLILYIFNAVALFIYLS). The Extracellular segment spans residues 284–291 (NMFDINSL). A helical membrane pass occupies residues 292 to 312 (WNNLCQIIMAAYPASHSILLI). Residues 313-338 (QDNPGLRRAWKRLQLRLHLYPKEWTL) are Cytoplasmic-facing.

It belongs to the G-protein coupled receptor T2R family. Expressed in subsets of taste receptor cells of the tongue and exclusively in gustducin-positive cells.

It is found in the membrane. Its function is as follows. Receptor that may play a role in the perception of bitterness and is gustducin-linked. May play a role in sensing the chemical composition of the gastrointestinal content. The activity of this receptor may stimulate alpha gustducin, mediate PLC-beta-2 activation and lead to the gating of TRPM5. The chain is Taste receptor type 2 member 39 (TAS2R39) from Homo sapiens (Human).